Reading from the N-terminus, the 162-residue chain is Ribosome maturation factor RimP (162 aa).

It belongs to the RimP family.

The protein resides in the cytoplasm. In terms of biological role, required for maturation of 30S ribosomal subunits. In Cupriavidus metallidurans (strain ATCC 43123 / DSM 2839 / NBRC 102507 / CH34) (Ralstonia metallidurans), this protein is Ribosome maturation factor RimP.